Consider the following 499-residue polypeptide: Glycerol kinase (499 aa).

T12 is a binding site for ADP. ATP is bound by residues T12, T13, and S14. Position 12 (T12) interacts with sn-glycerol 3-phosphate. R16 is a binding site for ADP. The sn-glycerol 3-phosphate site is built by R82, E83, Y134, and D240. Glycerol contacts are provided by R82, E83, Y134, D240, and Q241. Residues T262 and G306 each contribute to the ADP site. ATP-binding residues include T262, G306, Q310, and G412. ADP is bound by residues G412 and N416.

Belongs to the FGGY kinase family.

It catalyses the reaction glycerol + ATP = sn-glycerol 3-phosphate + ADP + H(+). It participates in polyol metabolism; glycerol degradation via glycerol kinase pathway; sn-glycerol 3-phosphate from glycerol: step 1/1. With respect to regulation, inhibited by fructose 1,6-bisphosphate (FBP). Functionally, key enzyme in the regulation of glycerol uptake and metabolism. Catalyzes the phosphorylation of glycerol to yield sn-glycerol 3-phosphate. The protein is Glycerol kinase of Nocardia farcinica (strain IFM 10152).